The primary structure comprises 328 residues: Hairy/enhancer-of-split related with YRPW motif-like protein (328 aa).

The disordered stretch occupies residues 1–57; the sequence is MKRPKEPSGSDGESDGPIDVGQEGQLSQMARPLSTPSSSQMQARKKHRGIIEKRRRD. A compositionally biased stretch (polar residues) spans 24 to 42; sequence GQLSQMARPLSTPSSSQMQ. The transcriptional repression and interaction with NCOR1 and SIN3A stretch occupies residues 42 to 111; the sequence is QARKKHRGII…GGTGFFDARA (70 aa). In terms of domain architecture, bHLH spans 43–98; the sequence is ARKKHRGIIEKRRRDRINSSLSELRRLVPTAFEKQGSSKLEKAEVLQMTVDHLKML. The Orange domain maps to 116-153; it reads FRSIGFRECLTEVIRYLGVLEGPSSRADPVRIRLLSHL. A disordered region spans residues 239-308; that stretch reads SRGASSTRRA…NSSSPGPAGR (70 aa). The span at 261 to 270 shows a compositional bias: low complexity; the sequence is APSSRAARSS.

It belongs to the HEY family. In terms of assembly, self-associates. Interacts with GATA4, GATA6, HES1, HEY1 and HEY2. Interacts with HDAC1, NCOR1 and SIN3A.

The protein resides in the nucleus. Functionally, downstream effector of Notch signaling which may be required for cardiovascular development. Transcriptional repressor which binds preferentially to the canonical E box sequence 5'-CACGTG-3'. Represses transcription by the cardiac transcriptional activators GATA4 and GATA6. The protein is Hairy/enhancer-of-split related with YRPW motif-like protein (HEYL) of Homo sapiens (Human).